The sequence spans 170 residues: S-ribosylhomocysteine lyase (170 aa).

Positions 54, 58, and 128 each coordinate Fe cation.

The protein belongs to the LuxS family. As to quaternary structure, homodimer. Fe cation is required as a cofactor.

It carries out the reaction S-(5-deoxy-D-ribos-5-yl)-L-homocysteine = (S)-4,5-dihydroxypentane-2,3-dione + L-homocysteine. Involved in the synthesis of autoinducer 2 (AI-2) which is secreted by bacteria and is used to communicate both the cell density and the metabolic potential of the environment. The regulation of gene expression in response to changes in cell density is called quorum sensing. Catalyzes the transformation of S-ribosylhomocysteine (RHC) to homocysteine (HC) and 4,5-dihydroxy-2,3-pentadione (DPD). The protein is S-ribosylhomocysteine lyase of Marinomonas sp. (strain MWYL1).